The sequence spans 528 residues: Protein MGF 505-7R (528 aa).

This sequence belongs to the asfivirus MGF 505 family. Interacts with host STING1. Interacts with host JAK1; this interaction leads to JAK1 degradation. Interacts with host JAK2; this interaction leads to JAK2 degradation. Interacts with host RELA; this interaction inhibits NF-kappa-B promoter activity.

The protein resides in the host cytoplasm. In terms of biological role, plays a role in virus cell tropism, and may be required for efficient virus replication in macrophages. Interferes with host NF-kappa-B promoter activity mediated by TLR8. Mechanistically, inhibits the phosphorylation and subsequent nuclear translocation of host NF-kappa-B RELA subunit downstream of TLR8. Promotes the expression of the autophagy-related protein host ULK1 to degrade host STING and inhibit the interferon response. Also inhibits JAK1- and JAK2-mediated signaling and thus negatively regulates the IFN-gamma signaling. This chain is Protein MGF 505-7R, found in African swine fever virus (isolate Pig/Kenya/KEN-50/1950) (ASFV).